A 284-amino-acid chain; its full sequence is L-ribulose-5-phosphate 3-epimerase UlaE (284 aa).

The protein belongs to the L-ribulose-5-phosphate 3-epimerase family.

The enzyme catalyses L-ribulose 5-phosphate = L-xylulose 5-phosphate. It functions in the pathway cofactor degradation; L-ascorbate degradation; D-xylulose 5-phosphate from L-ascorbate: step 3/4. Functionally, catalyzes the isomerization of L-xylulose-5-phosphate to L-ribulose-5-phosphate. Is involved in the anaerobic L-ascorbate utilization. This is L-ribulose-5-phosphate 3-epimerase UlaE from Salmonella typhimurium (strain LT2 / SGSC1412 / ATCC 700720).